A 146-amino-acid polypeptide reads, in one-letter code: Ribosome-binding factor A (146 aa).

A disordered region spans residues 122–146; sequence QQQFGSVDDVTENDIDEADDTEGKA. The span at 130-146 shows a compositional bias: acidic residues; the sequence is DVTENDIDEADDTEGKA.

It belongs to the RbfA family. Monomer. Binds 30S ribosomal subunits, but not 50S ribosomal subunits or 70S ribosomes.

It is found in the cytoplasm. In terms of biological role, one of several proteins that assist in the late maturation steps of the functional core of the 30S ribosomal subunit. Associates with free 30S ribosomal subunits (but not with 30S subunits that are part of 70S ribosomes or polysomes). Required for efficient processing of 16S rRNA. May interact with the 5'-terminal helix region of 16S rRNA. The protein is Ribosome-binding factor A of Shewanella sp. (strain MR-7).